We begin with the raw amino-acid sequence, 227 residues long: PKHD-type hydroxylase Bxeno_B2194 (227 aa).

A Fe2OG dioxygenase domain is found at 78–178 (KVFPPLFNRY…RVASFFWIQS (101 aa)). Residues His-96, Asp-98, and His-159 each contribute to the Fe cation site. 2-oxoglutarate is bound at residue Arg-169.

The cofactor is Fe(2+). It depends on L-ascorbate as a cofactor.

The sequence is that of PKHD-type hydroxylase Bxeno_B2194 from Paraburkholderia xenovorans (strain LB400).